A 355-amino-acid polypeptide reads, in one-letter code: MAGCCCLSAEEKESQRISAEIERQLRRDKKDARRELKLLLLGTGESGKSTFIKQMRIIHGSGYSDEDRKGFTKLVYQNIFTAMQAMIRAMDTLRIQYVCEQNKENAQIIREVEVDKVSMLSREQVEAIKQLWQDPGIQECYDRRREYQLSDSAKYYLTDIDRIATPSFVPTQQDVLRVRVPTTGIIEYPFDLENIIFRMVDVGGQRSERRKWIHCFESVTSIIFLVALSEYDQVLAECDNENRMEESKALFKTIITYPWFLNSSVILFLNKKDLLEEKIMYSHLISYFPEYTGPKQDVRAARDFILKLYQDQNPDKEKVIYSHFTCATDTDNIRFVFAAVKDTILQLNLREFNLV.

A G-alpha domain is found at 34 to 355 (RELKLLLLGT…QLNLREFNLV (322 aa)). The interval 37–50 (KLLLLGTGESGKST) is G1 motif. Residues 42-49 (GTGESGKS), 176-182 (LRVRVPT), 201-205 (DVGGQ), 270-273 (NKKD), and Ala-327 each bind GTP. Residue Ser-49 coordinates Mg(2+). Positions 174–182 (DVLRVRVPT) are G2 motif. Arg-179 is subject to ADP-ribosylarginine; by cholera toxin. Position 182 (Thr-182) interacts with Mg(2+). The interval 197–206 (FRMVDVGGQR) is G3 motif. The G4 motif stretch occupies residues 266–273 (ILFLNKKD). A G5 motif region spans residues 325–330 (TCATDT).

It belongs to the G-alpha family. G(q) subfamily. G proteins are composed of 3 units; alpha, beta and gamma. The alpha chain contains the guanine nucleotide binding site.

In terms of biological role, guanine nucleotide-binding proteins (G proteins) are involved as modulators or transducers in various transmembrane signaling systems. This Homo sapiens (Human) protein is Guanine nucleotide-binding protein subunit alpha-14 (GNA14).